The following is a 1078-amino-acid chain: Isoleucine--tRNA ligase (1078 aa).

A 'HIGH' region motif is present at residues 52-62 (PTANGKPALHH). A 'KMSKS' region motif is present at residues 637 to 641 (KMSKS). Lysine 640 is an ATP binding site.

It belongs to the class-I aminoacyl-tRNA synthetase family. IleS type 2 subfamily. In terms of assembly, monomer. Zn(2+) is required as a cofactor.

The protein localises to the cytoplasm. It carries out the reaction tRNA(Ile) + L-isoleucine + ATP = L-isoleucyl-tRNA(Ile) + AMP + diphosphate. Functionally, catalyzes the attachment of isoleucine to tRNA(Ile). As IleRS can inadvertently accommodate and process structurally similar amino acids such as valine, to avoid such errors it has two additional distinct tRNA(Ile)-dependent editing activities. One activity is designated as 'pretransfer' editing and involves the hydrolysis of activated Val-AMP. The other activity is designated 'posttransfer' editing and involves deacylation of mischarged Val-tRNA(Ile). In Deinococcus radiodurans (strain ATCC 13939 / DSM 20539 / JCM 16871 / CCUG 27074 / LMG 4051 / NBRC 15346 / NCIMB 9279 / VKM B-1422 / R1), this protein is Isoleucine--tRNA ligase.